We begin with the raw amino-acid sequence, 595 residues long: Adenine deaminase 2 (595 aa).

The protein belongs to the metallo-dependent hydrolases superfamily. Adenine deaminase family. The cofactor is Mn(2+).

It catalyses the reaction adenine + H2O + H(+) = hypoxanthine + NH4(+). In Rhizobium etli (strain ATCC 51251 / DSM 11541 / JCM 21823 / NBRC 15573 / CFN 42), this protein is Adenine deaminase 2.